The sequence spans 241 residues: Probable cobalt-factor III C(17)-methyltransferase (241 aa).

The protein belongs to the precorrin methyltransferase family.

It carries out the reaction Co(II)-factor III + S-adenosyl-L-methionine + H(+) = Co(II)-factor IV + S-adenosyl-L-homocysteine. It functions in the pathway cofactor biosynthesis; adenosylcobalamin biosynthesis; cob(II)yrinate a,c-diamide from sirohydrochlorin (anaerobic route): step 3/10. Its function is as follows. Methyltransferase that likely catalyzes the ring contraction and methylation of C-17 in cobalt-factor III to form cobalt-factor IV. May also convert cobalt-precorrin-3 to cobalt-precorrin-4. This Salmonella typhimurium (strain LT2 / SGSC1412 / ATCC 700720) protein is Probable cobalt-factor III C(17)-methyltransferase (cbiH).